Here is a 54-residue protein sequence, read N- to C-terminus: Light-harvesting protein B-870 beta chain (54 aa).

Residues E1–K20 are Cytoplasmic-facing. A bacteriochlorophyll is bound by residues H19 and H37. A helical membrane pass occupies residues I21–W43. Residues R44–S54 lie on the Periplasmic side of the membrane.

The protein belongs to the antenna complex beta subunit family. The core complex is formed by different alpha and beta chains, binding bacteriochlorophyll molecules, and arranged most probably in tetrameric structures disposed around the reaction center. The non-pigmented gamma chains may constitute additional components.

It is found in the cell inner membrane. Antenna complexes are light-harvesting systems, which transfer the excitation energy to the reaction centers. The protein is Light-harvesting protein B-870 beta chain of Rhodospirillum rubrum.